We begin with the raw amino-acid sequence, 999 residues long: Disks large-associated protein 1 (999 aa).

3 disordered regions span residues 155 to 213, 395 to 418, and 918 to 989; these read HSLE…GYWS, MAEDDSGDSDGSPKPSPKMQARRA, and NWRP…DSIE. The span at 194-204 shows a compositional bias: basic and acidic residues; sequence RERCKSAEPKN. Composition is skewed to basic and acidic residues over residues 923 to 932 and 947 to 965; these read DPPERKERRL and LARDRSLESTEKQRQEARK. Polar residues predominate over residues 976 to 985; sequence VRQNSATESA. A PDZ-binding motif is present at residues 997–999; the sequence is TRL.

Belongs to the SAPAP family.

It localises to the cell membrane. The protein localises to the postsynaptic density. It is found in the synapse. In terms of biological role, part of the postsynaptic scaffold in neuronal cells. This chain is Disks large-associated protein 1, found in Danio rerio (Zebrafish).